The following is a 128-amino-acid chain: CD59 glycoprotein (128 aa).

The signal sequence occupies residues M1 to S25. The UPAR/Ly6 domain occupies L26 to S108. 3 disulfides stabilise this stretch: C28/C51, C31/C38, and C44/C64. An N-linked (GlcNAc...) asparagine glycan is attached at N43. K66 carries N-linked (Glc) (glycation) lysine glycosylation. Disulfide bonds link C70–C88 and C89–C94. O-linked (GalNAc...) threonine glycosylation is found at T76 and T77. N102 is lipidated: GPI-anchor amidated asparagine. Positions G103–P128 are cleaved as a propeptide — removed in mature form.

In terms of assembly, interacts with T-cell surface antigen CD2. N- and O-glycosylated. The N-glycosylation mainly consists of a family of biantennary complex-type structures with and without lactosamine extensions and outer arm fucose residues. Also significant amounts of triantennary complexes (22%). Variable sialylation also present in the Asn-43 oligosaccharide. The predominant O-glycans are mono-sialylated forms of the disaccharide, Gal-beta-1,3GalNAc, and their sites of attachment are probably on Thr-76 and Thr-77. The GPI-anchor of soluble urinary CD59 has no inositol-associated phospholipid, but is composed of seven different GPI-anchor variants of one or more monosaccharide units. Major variants contain sialic acid, mannose and glucosamine. Sialic acid linked to an N-acetylhexosamine-galactose arm is present in two variants. In terms of processing, glycated. Glycation is found in diabetic subjects, but only at minimal levels in nondiabetic subjects. Glycated CD59 lacks MAC-inhibitory function and confers to vascular complications of diabetes.

It localises to the cell membrane. Its subcellular location is the secreted. In terms of biological role, potent inhibitor of the complement membrane attack complex (MAC) action, which protects human cells from damage during complement activation. Acts by binding to the beta-haipins of C8 (C8A and C8B) components of the assembling MAC, forming an intermolecular beta-sheet that prevents incorporation of the multiple copies of C9 required for complete formation of the osmolytic pore. The soluble form from urine retains its specific complement binding activity, but exhibits greatly reduced ability to inhibit complement membrane attack complex (MAC) assembly on cell membranes. This is CD59 glycoprotein from Homo sapiens (Human).